Consider the following 403-residue polypeptide: Ribosomal RNA large subunit methyltransferase I (403 aa).

One can recognise a PUA domain in the interval 9 to 86 (YPRLVLSKGR…KAESIDIAFF (78 aa)).

The protein belongs to the methyltransferase superfamily. RlmI family.

It localises to the cytoplasm. It catalyses the reaction cytidine(1962) in 23S rRNA + S-adenosyl-L-methionine = 5-methylcytidine(1962) in 23S rRNA + S-adenosyl-L-homocysteine + H(+). Its function is as follows. Specifically methylates the cytosine at position 1962 (m5C1962) of 23S rRNA. In Salmonella gallinarum (strain 287/91 / NCTC 13346), this protein is Ribosomal RNA large subunit methyltransferase I.